Reading from the N-terminus, the 648-residue chain is Acetyl-coenzyme A synthetase (648 aa).

CoA contacts are provided by residues 190–193 (RGGR) and Thr-310. Residues 386–388 (GEP), 410–415 (DTWWQT), Asp-499, and Arg-514 contribute to the ATP site. A CoA-binding site is contributed by Ser-522. Arg-525 contributes to the ATP binding site. 3 residues coordinate Mg(2+): Val-536, His-538, and Val-541. Arg-583 lines the CoA pocket. Lys-608 is modified (N6-acetyllysine).

This sequence belongs to the ATP-dependent AMP-binding enzyme family. Requires Mg(2+) as cofactor. Post-translationally, acetylated. Deacetylation by the SIR2-homolog deacetylase activates the enzyme.

The enzyme catalyses acetate + ATP + CoA = acetyl-CoA + AMP + diphosphate. Catalyzes the conversion of acetate into acetyl-CoA (AcCoA), an essential intermediate at the junction of anabolic and catabolic pathways. AcsA undergoes a two-step reaction. In the first half reaction, AcsA combines acetate with ATP to form acetyl-adenylate (AcAMP) intermediate. In the second half reaction, it can then transfer the acetyl group from AcAMP to the sulfhydryl group of CoA, forming the product AcCoA. This Methylobacterium radiotolerans (strain ATCC 27329 / DSM 1819 / JCM 2831 / NBRC 15690 / NCIMB 10815 / 0-1) protein is Acetyl-coenzyme A synthetase.